A 283-amino-acid chain; its full sequence is Non-selective voltage-gated ion channel VDAC3 (283 aa).

Cys2 carries the N-acetylcysteine modification. Thr4 is modified (phosphothreonine). N6-acetyllysine is present on residues Lys12, Lys15, and Lys20. Beta stranded transmembrane passes span 26–35 and 39–47; these read MVKIDLKTKS and VEFSTSGHA. Position 33 is a phosphothreonine (Thr33). Lys53 participates in a covalent cross-link: Glycyl lysine isopeptide (Lys-Gly) (interchain with G-Cter in ubiquitin). A run of 3 beta stranded transmembrane segments spans residues 54-64, 69-76, and 80-89; these read ASGNLETKYKV, LIFTQKWN, and TLGTEISWEN. N6-acetyllysine is present on Lys90. A beta stranded membrane pass occupies residues 95 to 104; sequence LKLTVDTIFV. Residues Lys109 and Lys110 each participate in a glycyl lysine isopeptide (Lys-Gly) (interchain with G-Cter in ubiquitin) cross-link. Beta stranded transmembrane passes span 111–120, 123–130, 137–145, 150–158, 163–175, 178–185, 189–198, 202–211, 218–227, and 231–238; these read SGKLKASYRR, FSVGSKVD, TIYGWAVLA, LAGYQMSFD, KLCQ…GYKA, FQLHTHVN, EFGGSIYQRV, IETSINLAWT, RFGIAAKYRL, and TSLSAKVN. The residue at position 241 (Ser241) is a Phosphoserine. Residues 242–244 and 260–264 contribute to the NAD(+) site; these read LIG and SALVD. 2 beta stranded membrane-spanning segments follow: residues 242 to 251 and 254 to 263; these read LIGLGYTQSL and GVKLTLSALV. An N6-acetyllysine; alternate modification is found at Lys266. Lys266 participates in a covalent cross-link: Glycyl lysine isopeptide (Lys-Gly) (interchain with G-Cter in ubiquitin); alternate. Residues 273-282 traverse the membrane as a beta stranded segment; the sequence is HKVGLGFELE.

It belongs to the eukaryotic mitochondrial porin family. Interacts with ARMC12 in a TBC1D21-dependent manner. Interacts with MISFA. Post-translationally, ubiquitinated by PRKN during mitophagy, leading to its degradation and enhancement of mitophagy. Deubiquitinated by USP30. Isoform 1 is widely expressed with strong expression in atrium and ascitic tumor, lower levels in brain and very low levels in liver and kidney. Isoform 2 is also widely expressed with highest levels in brain but no expression in kidney. Also expressed in flagella of epididymal sperm.

The protein resides in the mitochondrion outer membrane. The protein localises to the membrane. The catalysed reaction is chloride(in) = chloride(out). It catalyses the reaction K(+)(in) = K(+)(out). Its function is as follows. Non-selective voltage-gated ion channel that mediates the transport of anions and cations through the mitochondrion outer membrane and plasma membrane. Forms a high-conducting channel with a stable open state and a voltage-induced closure with a mild preference for anions over cations. Involved in male fertility and sperm mitochondrial sheath formation. This Rattus norvegicus (Rat) protein is Non-selective voltage-gated ion channel VDAC3.